The primary structure comprises 510 residues: ATP synthase subunit alpha (510 aa).

ATP is bound at residue glycine 169–threonine 176.

This sequence belongs to the ATPase alpha/beta chains family. In terms of assembly, F-type ATPases have 2 components, CF(1) - the catalytic core - and CF(0) - the membrane proton channel. CF(1) has five subunits: alpha(3), beta(3), gamma(1), delta(1), epsilon(1). CF(0) has three main subunits: a(1), b(2) and c(9-12). The alpha and beta chains form an alternating ring which encloses part of the gamma chain. CF(1) is attached to CF(0) by a central stalk formed by the gamma and epsilon chains, while a peripheral stalk is formed by the delta and b chains.

The protein resides in the cell inner membrane. It carries out the reaction ATP + H2O + 4 H(+)(in) = ADP + phosphate + 5 H(+)(out). In terms of biological role, produces ATP from ADP in the presence of a proton gradient across the membrane. The alpha chain is a regulatory subunit. The chain is ATP synthase subunit alpha from Rickettsia massiliae (strain Mtu5).